A 541-amino-acid polypeptide reads, in one-letter code: Transmembrane protein 151 homolog (541 aa).

The next 3 membrane-spanning stretches (helical) occupy residues 27 to 47 (GYGK…YATF), 73 to 93 (YNFV…MECW), and 254 to 274 (PWFL…SWPL). The disordered stretch occupies residues 503–541 (ASISHSSSKDLKSLTLKSSSSNNNNNNSNNNNNDDPEHP). Positions 515 to 535 (SLTLKSSSSNNNNNNSNNNNN) are enriched in low complexity.

It belongs to the TMEM151 family.

The protein localises to the membrane. The protein is Transmembrane protein 151 homolog of Caenorhabditis elegans.